A 455-amino-acid chain; its full sequence is L-serine dehydratase 2 (455 aa).

Belongs to the iron-sulfur dependent L-serine dehydratase family. Requires [4Fe-4S] cluster as cofactor. Post-translationally, activated by post-translational modification by a system involving at least three gene products. Activation is mimicked in vitro by iron and dithiothreitol. There is considerable evidence for a free-radical activation mechanism.

It carries out the reaction L-serine = pyruvate + NH4(+). It participates in carbohydrate biosynthesis; gluconeogenesis. Functionally, also deaminates threonine, particularly when it is present in high concentration. This chain is L-serine dehydratase 2 (sdaB), found in Escherichia coli (strain K12).